The primary structure comprises 335 residues: Probable deoxyhypusine synthase (335 aa).

Lys307 acts as the Nucleophile in catalysis.

This sequence belongs to the deoxyhypusine synthase family. NAD(+) serves as cofactor.

It carries out the reaction [eIF5A protein]-L-lysine + spermidine = [eIF5A protein]-deoxyhypusine + propane-1,3-diamine. It functions in the pathway protein modification; eIF5A hypusination. In terms of biological role, catalyzes the NAD-dependent oxidative cleavage of spermidine and the subsequent transfer of the butylamine moiety of spermidine to the epsilon-amino group of a specific lysine residue of the eIF-5A precursor protein to form the intermediate deoxyhypusine residue. This Pyrococcus abyssi (strain GE5 / Orsay) protein is Probable deoxyhypusine synthase (dys).